The chain runs to 303 residues: Probable 5-dehydro-4-deoxyglucarate dehydratase (303 aa).

The protein belongs to the DapA family.

The enzyme catalyses 5-dehydro-4-deoxy-D-glucarate + H(+) = 2,5-dioxopentanoate + CO2 + H2O. It participates in carbohydrate acid metabolism; D-glucarate degradation; 2,5-dioxopentanoate from D-glucarate: step 2/2. The polypeptide is Probable 5-dehydro-4-deoxyglucarate dehydratase (Pseudomonas fluorescens (strain Pf0-1)).